A 264-amino-acid chain; its full sequence is MQQWNLTISNILIGLFFCFSAQASEIAPSPTISAVQNKPTITMAFYEDPKHSFHFKWAELIYTHALAQLGYRFSYELVPAIRASKMLESGKVGGEPGRIFSYGDKVSNVIRIEEPVIETQLIAFTSNPNIKITHWQSLTNTGYKVEYYRGILRAEQILNELIPETQLSESSSPITSFRKLLHDRIDIYIDSEISLQILQQTPEFAGQKIQPIANLEPLTSYGYLHKRHNQLAEPLADQLKKMKQEGLFERYKQQAKASFEDHAE.

The signal sequence occupies residues 1 to 23; it reads MQQWNLTISNILIGLFFCFSAQA.

This is an uncharacterized protein from Shewanella oneidensis (strain ATCC 700550 / JCM 31522 / CIP 106686 / LMG 19005 / NCIMB 14063 / MR-1).